The chain runs to 83 residues: Small ribosomal subunit protein bS20 (83 aa).

This sequence belongs to the bacterial ribosomal protein bS20 family.

Functionally, binds directly to 16S ribosomal RNA. This chain is Small ribosomal subunit protein bS20, found in Staphylococcus carnosus (strain TM300).